The sequence spans 302 residues: Alpha-N-acetyl-neuraminyl-2,3-beta-galactosyl-1,3-N-acetyl-galactosaminide alpha-2,6-sialyltransferase (302 aa).

Topologically, residues 1–6 (MKAPGR) are cytoplasmic. The chain crosses the membrane as a helical; Signal-anchor for type II membrane protein span at residues 7–27 (LVLIILCSVVFSAVYILLCCW). The Lumenal segment spans residues 28-302 (AGLPLCLATC…VFAHPSWRTE (275 aa)). C76 and C225 are joined by a disulfide. A glycan (N-linked (GlcNAc...) asparagine) is linked at N135.

Belongs to the glycosyltransferase 29 family. Ubiquitous.

It is found in the golgi apparatus membrane. It catalyses the reaction an alpha-Neu5Ac-(2-&gt;3)-beta-D-Gal-(1-&gt;3)-D-GlcNAc derivative + CMP-N-acetyl-beta-neuraminate = an alpha-Neu5Ac-(2-&gt;3)-beta-D-Gal-(1-&gt;3)-[alpha-Neu5Ac-(2-&gt;6)]-D-GlcNAc derivative + CMP + H(+). The enzyme catalyses N-acetyl-alpha-neuraminosyl-(2-&gt;3)-beta-D-galactosyl-(1-&gt;3)-N-acetyl-D-galactosamine + CMP-N-acetyl-beta-neuraminate = N-acetyl-alpha-neuraminosyl-(2-&gt;3)-beta-D-galactosyl-(1-&gt;3)-[N-acetyl-alpha-neuraminosyl-(2-&gt;6)]-N-acetyl-D-galactosamine + CMP + H(+). It carries out the reaction a ganglioside GM1b (d18:1(4E)) + CMP-N-acetyl-beta-neuraminate = a ganglioside GD1alpha (d18:1(4E)) + CMP + H(+). The catalysed reaction is 3-O-[alpha-Neu5Ac-(2-&gt;3)-beta-D-Gal-(1-&gt;3)-alpha-D-GalNAc]-L-Ser-[protein] + CMP-N-acetyl-beta-neuraminate = a 3-O-{alpha-Neu5Ac-(2-&gt;3)-beta-D-Gal-(1-&gt;3)-[alpha-Neu5Ac-(2-&gt;6)]-alpha-D-GalNAc}-L-seryl-[protein] + CMP + H(+). It catalyses the reaction 3-O-[alpha-Neu5Ac-(2-&gt;3)-beta-D-Gal-(1-&gt;3)-alpha-D-GalNAc]-L-Thr-[protein] + CMP-N-acetyl-beta-neuraminate = a 3-O-{alpha-Neu5Ac-(2-&gt;3)-beta-D-Gal-(1-&gt;3)-[alpha-Neu5Ac-(2-&gt;6)]-alpha-D-GalNAc}-L-threonyl-[protein] + CMP + H(+). It participates in protein modification; protein glycosylation. The protein operates within glycolipid biosynthesis. Transfers the sialyl group (N-acetyl-alpha-neuraminyl or NeuAc) from CMP-NeuAc to the GalNAc residue on the NeuAc-alpha-2,3-Gal-beta-1,3-GalNAc sequence of glycoproteins and glycolipids forming an alpha-2,6-linkage. Produces branched type disialyl structures by transfer of a sialyl group onto a GalNAc residue inside the backbone core chains. Prefers O-glycans to glycoproteins or glycolipids. In Homo sapiens (Human), this protein is Alpha-N-acetyl-neuraminyl-2,3-beta-galactosyl-1,3-N-acetyl-galactosaminide alpha-2,6-sialyltransferase (ST6GALNAC4).